We begin with the raw amino-acid sequence, 524 residues long: Butyrophilin subfamily 1 member A1 (524 aa).

The N-terminal stretch at 1–26 (MAVPTNSCLLVCLLTLTVLQLPTLDS) is a signal peptide. The Extracellular portion of the chain corresponds to 27–247 (AAPFDVTAPQ…APFVPRLTPW (221 aa)). Ig-like V-type domains lie at 29 to 141 (PFDV…VYLK) and 149 to 235 (PQIS…VEIS). 2 cysteine pairs are disulfide-bonded: cysteine 51–cysteine 125 and cysteine 165–cysteine 219. N-linked (GlcNAc...) asparagine glycosylation is found at asparagine 56 and asparagine 216. The chain crosses the membrane as a helical span at residues 248–268 (IVAVAIILLALGFLTIGSIFF). Over 269-524 (TWKLYKERSS…IPFSPSQAAP (256 aa)) the chain is Cytoplasmic. The region spanning 286 to 480 (SKERLLEELR…LTICSTANGP (195 aa)) is the B30.2/SPRY domain.

Belongs to the immunoglobulin superfamily. BTN/MOG family. As to quaternary structure, seems to associate with xanthine dehydrogenase/oxidase. In terms of processing, N-glycosylated. In terms of tissue distribution, strongly expressed in lactating mammary tissue (at protein level). About 100-fold lower levels in virgin mammary tissue. Also detected in spleen and thymus at 10-20 times lower levels compared to those detected in virgin mammary gland. Very low levels in several other tissues, including brain, heart, kidney, lymph node, lung and small intestine. In the thymus, detected in the stroma, in epithelial cells (at protein level). Most prominent in medullary areas of the thymus and at the corticomedullary junction (at protein level).

The protein localises to the membrane. In terms of biological role, may function in the secretion of milk-fat droplets. May act as a specific membrane-associated receptor for the association of cytoplasmic droplets with the apical plasma membrane. Inhibits the proliferation of CD4 and CD8 T-cells activated by anti-CD3 antibodies, T-cell metabolism and IL2 and IFNG secretion. This Mus musculus (Mouse) protein is Butyrophilin subfamily 1 member A1 (Btn1a1).